We begin with the raw amino-acid sequence, 122 residues long: Photosystem II extrinsic protein U (122 aa).

The signal sequence occupies residues Met1–Ala30.

It belongs to the PsbU family. PSII is composed of 1 copy each of membrane proteins PsbA, PsbB, PsbC, PsbD, PsbE, PsbF, PsbH, PsbI, PsbJ, PsbK, PsbL, PsbM, PsbT, PsbX, PsbY, PsbZ, Psb30/Ycf12, peripheral proteins PsbO, CyanoQ (PsbQ), PsbU, PsbV and a large number of cofactors. It forms dimeric complexes.

Its subcellular location is the cellular thylakoid membrane. Functionally, one of the extrinsic, lumenal subunits of photosystem II (PSII). PSII is a light-driven water plastoquinone oxidoreductase, using light energy to abstract electrons from H(2)O, generating a proton gradient subsequently used for ATP formation. The extrinsic proteins stabilize the structure of photosystem II oxygen-evolving complex (OEC), the ion environment of oxygen evolution and protect the OEC against heat-induced inactivation. In Synechococcus sp. (strain JA-2-3B'a(2-13)) (Cyanobacteria bacterium Yellowstone B-Prime), this protein is Photosystem II extrinsic protein U.